The following is a 243-amino-acid chain: Methylthioribulose-1-phosphate dehydratase (243 aa).

Residues 1 to 22 form a disordered region; it reads MCPADQTVATNNNDHLVQSEDP. The segment covering 7 to 16 has biased composition (polar residues); that stretch reads TVATNNNDHL. Cys103 lines the substrate pocket. His120 and His122 together coordinate Zn(2+). The active-site Proton donor/acceptor is Glu149. Zn(2+) is bound at residue His205.

This sequence belongs to the aldolase class II family. MtnB subfamily. Zn(2+) serves as cofactor.

It is found in the cytoplasm. The catalysed reaction is 5-(methylsulfanyl)-D-ribulose 1-phosphate = 5-methylsulfanyl-2,3-dioxopentyl phosphate + H2O. It functions in the pathway amino-acid biosynthesis; L-methionine biosynthesis via salvage pathway; L-methionine from S-methyl-5-thio-alpha-D-ribose 1-phosphate: step 2/6. In terms of biological role, catalyzes the dehydration of methylthioribulose-1-phosphate (MTRu-1-P) into 2,3-diketo-5-methylthiopentyl-1-phosphate (DK-MTP-1-P). The protein is Methylthioribulose-1-phosphate dehydratase of Penicillium rubens (strain ATCC 28089 / DSM 1075 / NRRL 1951 / Wisconsin 54-1255) (Penicillium chrysogenum).